The chain runs to 592 residues: Arginine--tRNA ligase (592 aa).

Residues 112–122 carry the 'HIGH' region motif; it reads VNPNKELHVGH.

The protein belongs to the class-I aminoacyl-tRNA synthetase family. In terms of assembly, monomer.

It is found in the cytoplasm. The catalysed reaction is tRNA(Arg) + L-arginine + ATP = L-arginyl-tRNA(Arg) + AMP + diphosphate. The polypeptide is Arginine--tRNA ligase (Thermus thermophilus (strain ATCC 27634 / DSM 579 / HB8)).